The primary structure comprises 477 residues: Trigger factor (477 aa).

Residues glutamate 169–leucine 254 form the PPIase FKBP-type domain. The tract at residues valine 435–alanine 477 is disordered. Basic residues predominate over residues alanine 454–lysine 466. The span at lysine 467–alanine 477 shows a compositional bias: basic and acidic residues.

This sequence belongs to the FKBP-type PPIase family. Tig subfamily.

It is found in the cytoplasm. It catalyses the reaction [protein]-peptidylproline (omega=180) = [protein]-peptidylproline (omega=0). Involved in protein export. Acts as a chaperone by maintaining the newly synthesized protein in an open conformation. Functions as a peptidyl-prolyl cis-trans isomerase. In Brucella suis biovar 1 (strain 1330), this protein is Trigger factor.